The following is a 258-amino-acid chain: Hydroxyethylthiazole kinase (258 aa).

Position 37 (methionine 37) interacts with substrate. Residues arginine 112 and threonine 158 each contribute to the ATP site. Substrate is bound at residue alanine 185.

This sequence belongs to the Thz kinase family. Mg(2+) serves as cofactor.

It carries out the reaction 5-(2-hydroxyethyl)-4-methylthiazole + ATP = 4-methyl-5-(2-phosphooxyethyl)-thiazole + ADP + H(+). It functions in the pathway cofactor biosynthesis; thiamine diphosphate biosynthesis; 4-methyl-5-(2-phosphoethyl)-thiazole from 5-(2-hydroxyethyl)-4-methylthiazole: step 1/1. In terms of biological role, catalyzes the phosphorylation of the hydroxyl group of 4-methyl-5-beta-hydroxyethylthiazole (THZ). This Rhizobium etli (strain ATCC 51251 / DSM 11541 / JCM 21823 / NBRC 15573 / CFN 42) protein is Hydroxyethylthiazole kinase.